A 309-amino-acid chain; its full sequence is General transcription factor IIH subunit 3 (309 aa).

The C4-type zinc-finger motif lies at 269-286; the sequence is CSVCLSIFCNFSPICTTC.

It belongs to the TFB4 family. As to quaternary structure, part of a TFIID-containing RNA polymerase II pre-initiation complex that is composed of TBP and at least GTF2A1, GTF2A2, GTF2E1, GTF2E2, GTF2F1, GTF2H2, GTF2H3, GTF2H4, GTF2H5, GTF2B, TCEA1, ERCC2, ERCC3, TAF1, TAF2, TAF3, TAF4, TAF5, TAF6, TAF7, TAF8, TAF9, TAF10, TAF11, TAF12 and TAF13. Component of the 7-subunit TFIIH core complex composed of XPB/ERCC3, XPD/ERCC2, GTF2H1, GTF2H2, GTF2H3, GTF2H4 and GTF2H5, which is active in NER. The core complex associates with the 3-subunit CDK-activating kinase (CAK) module composed of CCNH/cyclin H, CDK7 and MNAT1 to form the 10-subunit holoenzyme (holo-TFIIH) active in transcription. Interacts with RARA; the interaction requires prior phosphorylation of RARA on 'Ser-369' which then enhances interaction of RARA with CDK7.

The protein localises to the nucleus. Functionally, component of the general transcription and DNA repair factor IIH (TFIIH) core complex, which is involved in general and transcription-coupled nucleotide excision repair (NER) of damaged DNA and, when complexed to CAK, in RNA transcription by RNA polymerase II. In NER, TFIIH acts by opening DNA around the lesion to allow the excision of the damaged oligonucleotide and its replacement by a new DNA fragment. In transcription, TFIIH has an essential role in transcription initiation. When the pre-initiation complex (PIC) has been established, TFIIH is required for promoter opening and promoter escape. Phosphorylation of the C-terminal tail (CTD) of the largest subunit of RNA polymerase II by the kinase module CAK controls the initiation of transcription. In Bos taurus (Bovine), this protein is General transcription factor IIH subunit 3 (GTF2H3).